Reading from the N-terminus, the 475-residue chain is Adenosylhomocysteinase (475 aa).

Substrate is bound by residues threonine 66, aspartate 141, and glutamate 201. Residue 202–204 coordinates NAD(+); the sequence is TTT. The substrate site is built by lysine 231 and aspartate 235. NAD(+) is bound by residues asparagine 236, 265-270, glutamate 288, asparagine 323, 344-346, and asparagine 389; these read GYGEVG and IGH.

It belongs to the adenosylhomocysteinase family. Requires NAD(+) as cofactor.

Its subcellular location is the cytoplasm. The enzyme catalyses S-adenosyl-L-homocysteine + H2O = L-homocysteine + adenosine. Its pathway is amino-acid biosynthesis; L-homocysteine biosynthesis; L-homocysteine from S-adenosyl-L-homocysteine: step 1/1. In terms of biological role, may play a key role in the regulation of the intracellular concentration of adenosylhomocysteine. The sequence is that of Adenosylhomocysteinase from Geobacter sulfurreducens (strain ATCC 51573 / DSM 12127 / PCA).